The following is a 321-amino-acid chain: Cytochrome c biogenesis protein CcsA (321 aa).

A run of 8 helical transmembrane segments spans residues 17 to 37, 44 to 64, 71 to 91, 98 to 118, 143 to 163, 225 to 245, 258 to 275, and 286 to 306; these read IVSI…IVGL, GMIS…IYSG, LYES…IPYF, LSLV…SGLL, MVLS…LLVI, VISL…VWAN, ETWA…LHTR, and AIVA…VNLL.

This sequence belongs to the CcmF/CycK/Ccl1/NrfE/CcsA family. May interact with Ccs1.

The protein localises to the plastid. The protein resides in the chloroplast thylakoid membrane. Functionally, required during biogenesis of c-type cytochromes (cytochrome c6 and cytochrome f) at the step of heme attachment. The protein is Cytochrome c biogenesis protein CcsA of Buxus microphylla (Littleleaf boxwood).